We begin with the raw amino-acid sequence, 476 residues long: Glycogen synthase (476 aa).

Lys-15 lines the ADP-alpha-D-glucose pocket.

Belongs to the glycosyltransferase 1 family. Bacterial/plant glycogen synthase subfamily.

It catalyses the reaction [(1-&gt;4)-alpha-D-glucosyl](n) + ADP-alpha-D-glucose = [(1-&gt;4)-alpha-D-glucosyl](n+1) + ADP + H(+). It participates in glycan biosynthesis; glycogen biosynthesis. Synthesizes alpha-1,4-glucan chains using ADP-glucose. This chain is Glycogen synthase, found in Chlamydia pneumoniae (Chlamydophila pneumoniae).